The chain runs to 1883 residues: Zinc finger protein 106 (1883 aa).

Glycyl lysine isopeptide (Lys-Gly) (interchain with G-Cter in SUMO2) cross-links involve residues Ile6 and Lys37. A C2H2-type 1; atypical zinc finger spans residues 20–44; it reads HECRVCGVTEVGLSAYAKHISGQLH. The segment at 39-162 is disordered; sequence ISGQLHKDNV…NGGGPRGRSG (124 aa). Over residues 52 to 67 the composition is skewed to acidic residues; that stretch reads EREDDGKGEEEEEDYF. Glycyl lysine isopeptide (Lys-Gly) (interchain with G-Cter in SUMO2) cross-links involve residues Lys69 and Lys76. Composition is skewed to basic and acidic residues over residues 77-86, 96-116, and 128-138; these read QRKEQSRQDE, SDDRRPQWRREDRIPYQDRES, and PQRDWKWEKDG. Lys133 is covalently cross-linked (Glycyl lysine isopeptide (Lys-Gly) (interchain with G-Cter in SUMO2)). Residues 139 to 148 show a composition bias toward polar residues; that stretch reads FNNTRKNSFP. Glycyl lysine isopeptide (Lys-Gly) (interchain with G-Cter in SUMO2) cross-links involve residues Lys243, Lys287, and Lys305. Over residues 322 to 338 the composition is skewed to polar residues; that stretch reads QTTKQADTATSKVSGKN. A disordered region spans residues 322-356; that stretch reads QTTKQADTATSKVSGKNGSAAREKPRRWTPYPSQK. Residues Lys356, Lys365, Lys371, and Lys417 each participate in a glycyl lysine isopeptide (Lys-Gly) (interchain with G-Cter in SUMO2) cross-link. Positions 389–423 are disordered; it reads IQEPQTDETRNSPTQKTQKEIHTGSLNHKASSDSA. A compositionally biased stretch (polar residues) spans 412-423; it reads GSLNHKASSDSA. Ser422 is subject to Phosphoserine. Residues Lys451, Lys461, Lys477, Lys492, Lys505, Lys515, Lys525, Lys539, and Lys557 each participate in a glycyl lysine isopeptide (Lys-Gly) (interchain with G-Cter in SUMO2) cross-link. The disordered stretch occupies residues 457-501; it reads CPATKSLSQKQDPKNISKNTKTNFFSPGEHSNPSNKPTVEDNHGP. The segment covering 461–493 has biased composition (polar residues); that stretch reads KSLSQKQDPKNISKNTKTNFFSPGEHSNPSNKP. The tract at residues 586–637 is disordered; that stretch reads LEDESDGETSDTEKHGTKIGTLGSATTELLSGSTRTADEKEEDDRILKTSRE. A Phosphoserine modification is found at Ser590. A Glycyl lysine isopeptide (Lys-Gly) (interchain with G-Cter in SUMO2) cross-link involves residue Lys603. Polar residues predominate over residues 608-620; it reads GSATTELLSGSTR. A phosphoserine mark is found at Ser641 and Ser661. Glycyl lysine isopeptide (Lys-Gly) (interchain with G-Cter in SUMO2) cross-links involve residues Lys671, Lys684, Lys705, Lys721, Lys741, Lys775, and Lys807. A phosphoserine mark is found at Ser859, Ser861, Ser864, and Ser893. The segment at 879–945 is disordered; the sequence is EEGTGKENEP…HSAQLSSDHI (67 aa). Polar residues predominate over residues 888–906; that stretch reads PQQMVSPSNSLRAGQSQKA. Residues Lys905 and Lys911 each participate in a glycyl lysine isopeptide (Lys-Gly) (interchain with G-Cter in SUMO2) cross-link. Ser937 is modified (phosphoserine). Lys953 participates in a covalent cross-link: Glycyl lysine isopeptide (Lys-Gly) (interchain with G-Cter in SUMO2). Residues 958 to 976 show a composition bias toward polar residues; the sequence is QERSIPPSENQNSQESNGE. 4 disordered regions span residues 958–982, 997–1048, 1121–1140, and 1182–1218; these read QERSIPPSENQNSQESNGEGNCLSS, ATDS…KERS, EPSEHPDQVPCSLTRERRNS, and PTFQTHGSVPAPDSSVQIKQEPMSPEQDENVNAVPPS. Thr1021 bears the Phosphothreonine mark. Phosphoserine occurs at positions 1025, 1026, and 1031. The segment covering 1035-1045 has biased composition (basic residues); the sequence is KNKRRKIKGKK. Ser1249 bears the Phosphoserine mark. Residues 1252–1483 are disordered; sequence ESTESFHEPS…EVSSTSEIGT (232 aa). A compositionally biased stretch (basic and acidic residues) spans 1255–1277; the sequence is ESFHEPSQELKFSVEQRNTRNRE. Residue Lys1265 forms a Glycyl lysine isopeptide (Lys-Gly) (interchain with G-Cter in SUMO2) linkage. 2 stretches are compositionally biased toward polar residues: residues 1278–1291 and 1299–1312; these read NSPSSQSAGLSSIN and KGNSGSEACTSSFL. Residues Ser1279, Ser1281, and Ser1284 each carry the phosphoserine modification. Residue Lys1299 forms a Glycyl lysine isopeptide (Lys-Gly) (interchain with G-Cter in SUMO2) linkage. Ser1302 is modified (phosphoserine). Lys1324 is covalently cross-linked (Glycyl lysine isopeptide (Lys-Gly) (interchain with G-Cter in SUMO2)). Ser1328 is modified (phosphoserine). Over residues 1333–1346 the composition is skewed to polar residues; the sequence is PEQQAESTLTSAET. Residues 1349–1362 are compositionally biased toward basic residues; sequence SKKKKKLRKKKSLR. A Phosphoserine modification is found at Ser1370. At Thr1372 the chain carries Phosphothreonine. Residues Lys1380, Lys1392, and Lys1395 each participate in a glycyl lysine isopeptide (Lys-Gly) (interchain with G-Cter in SUMO2) cross-link. Basic and acidic residues-rich tracts occupy residues 1402 to 1416 and 1444 to 1456; these read EDSRTGREQESVRDE and GEEKPDSPSKKDI. Lys1454 is covalently cross-linked (Glycyl lysine isopeptide (Lys-Gly) (interchain with G-Cter in SUMO2)). The span at 1457 to 1481 shows a compositional bias: polar residues; it reads WNSTEQNPLETSRSGCDEVSSTSEI. A Phosphoserine modification is found at Ser1468. Glycyl lysine isopeptide (Lys-Gly) (interchain with G-Cter in SUMO2) cross-links involve residues Lys1486 and Lys1504. Residues 1502 to 1513 are compositionally biased toward polar residues; that stretch reads SIKGSKNSSEIS. The segment at 1502-1527 is disordered; it reads SIKGSKNSSEISSEPGDDDEPTEGSF. 6 WD repeats span residues 1529–1568, 1570–1611, 1654–1695, 1698–1737, 1738–1775, and 1778–1815; these read GHQAAVNAIQIFGNLLYTCSADKTVRVYNLVSRKCIGVFE, HTSK…CVEQ, HGPR…LLRT, GHSKTILCMKVVNDLVFSGSSDQSVHAHNIHTGELVRIYK, GHNHAVTVVNILGKVMVTACLDKFVRVYELQSHDRLQV, and GHKDMIMCMTIHKSMIYTGCYDGSIQAVRLNLMQNYRC. A Glycyl lysine isopeptide (Lys-Gly) (interchain with G-Cter in SUMO2) cross-link involves residue Lys1585. Lys1737 participates in a covalent cross-link: Glycyl lysine isopeptide (Lys-Gly) (interchain with G-Cter in SUMO2). The segment at 1813 to 1838 adopts a C2H2-type 2; atypical zinc-finger fold; sequence YRCWWHGCSLIFGVVDHLKQHLLTDH. Lys1864 participates in a covalent cross-link: Glycyl lysine isopeptide (Lys-Gly) (interchain with G-Cter in SUMO2).

In terms of assembly, interacts with KNOP1. Interacts with TARDBP and NUP107. Interacts (via N-terminus) with RBM39. Interacts with the SH3 domains of FYN and GRB2. In terms of processing, phosphorylated by FYN in vitro.

Its subcellular location is the nucleus. The protein localises to the nucleolus. It localises to the nucleus speckle. Functionally, RNA-binding protein. Specifically binds to 5'-GGGGCC-3' sequence repeats in RNA. Essential for maintenance of peripheral motor neuron and skeletal muscle function. Required for normal expression and/or alternative splicing of a number of genes in spinal cord and skeletal muscle, including the neurite outgrowth inhibitor RTN4. Also contributes to normal mitochondrial respiratory function in motor neurons, via an unknown mechanism. This Homo sapiens (Human) protein is Zinc finger protein 106 (ZNF106).